Consider the following 466-residue polypeptide: Ribulose bisphosphate carboxylase large chain (466 aa).

Residue lysine 4 is modified to N6,N6,N6-trimethyllysine. Residues asparagine 113 and threonine 163 each contribute to the substrate site. Lysine 165 acts as the Proton acceptor in catalysis. Residue lysine 167 coordinates substrate. Mg(2+)-binding residues include lysine 191, aspartate 193, and glutamate 194. The residue at position 191 (lysine 191) is an N6-carboxylysine. Histidine 284 (proton acceptor) is an active-site residue. Arginine 285, histidine 317, and serine 369 together coordinate substrate.

Belongs to the RuBisCO large chain family. Type I subfamily. In terms of assembly, heterohexadecamer of 8 large chains and 8 small chains; disulfide-linked. The disulfide link is formed within the large subunit homodimers. The cofactor is Mg(2+). In terms of processing, the disulfide bond which can form in the large chain dimeric partners within the hexadecamer appears to be associated with oxidative stress and protein turnover.

It localises to the plastid. The protein resides in the chloroplast. The catalysed reaction is 2 (2R)-3-phosphoglycerate + 2 H(+) = D-ribulose 1,5-bisphosphate + CO2 + H2O. It carries out the reaction D-ribulose 1,5-bisphosphate + O2 = 2-phosphoglycolate + (2R)-3-phosphoglycerate + 2 H(+). RuBisCO catalyzes two reactions: the carboxylation of D-ribulose 1,5-bisphosphate, the primary event in carbon dioxide fixation, as well as the oxidative fragmentation of the pentose substrate in the photorespiration process. Both reactions occur simultaneously and in competition at the same active site. The chain is Ribulose bisphosphate carboxylase large chain from Proboscidea louisianica (Louisiana Devil's-claw).